The primary structure comprises 1426 residues: DNA-directed RNA polymerase subunit beta' (1426 aa).

4 residues coordinate Zn(2+): Cys71, Cys73, Cys86, and Cys89. Mg(2+) is bound by residues Asp461, Asp463, and Asp465. Residues Cys814, Cys888, Cys895, and Cys898 each coordinate Zn(2+). A disordered region spans residues 1392-1426 (ADPIAAAESAIGLGGGEQPATSETGAGGSDPSEEG).

The protein belongs to the RNA polymerase beta' chain family. As to quaternary structure, the RNAP catalytic core consists of 2 alpha, 1 beta, 1 beta' and 1 omega subunit. When a sigma factor is associated with the core the holoenzyme is formed, which can initiate transcription. The cofactor is Mg(2+). It depends on Zn(2+) as a cofactor.

The enzyme catalyses RNA(n) + a ribonucleoside 5'-triphosphate = RNA(n+1) + diphosphate. Functionally, DNA-dependent RNA polymerase catalyzes the transcription of DNA into RNA using the four ribonucleoside triphosphates as substrates. The polypeptide is DNA-directed RNA polymerase subunit beta' (Alkalilimnicola ehrlichii (strain ATCC BAA-1101 / DSM 17681 / MLHE-1)).